The primary structure comprises 189 residues: Large ribosomal subunit protein uL13 (189 aa).

The protein belongs to the universal ribosomal protein uL13 family.

This is Large ribosomal subunit protein uL13 (rpl13a) from Salmo trutta (Brown trout).